The following is a 363-amino-acid chain: Adenosine deaminase (363 aa).

Zn(2+)-binding residues include H42 and H44. A purine D-ribonucleoside contacts are provided by residues 44-46, D172, and G201; that span reads HLD. Residues 170–184 form a gating helix loop; regulates binding affinity for substrates and thus substrate selectivity region; it reads IGDTGHEAANIKASA. H226 provides a ligand contact to Zn(2+). Positions 229, 253, and 310 each coordinate a purine D-ribonucleoside. Position 310 (D310) interacts with Zn(2+).

This sequence belongs to the metallo-dependent hydrolases superfamily. Adenosine and AMP deaminases family. Zn(2+) serves as cofactor.

It catalyses the reaction adenosine + H2O + H(+) = inosine + NH4(+). The catalysed reaction is S-methyl-5'-thioadenosine + H2O + H(+) = S-methyl-5'-thioinosine + NH4(+). The protein operates within purine metabolism; purine nucleoside salvage. Inhibited by coformycin and methylthiocoformycin (MT-coformycin). In terms of biological role, catalyzes the hydrolytic deamination of adenosine to produce inosine. Unlike mammalian adenosine deaminases, also catalyzes the deamination of 5'-methylthioadenosine (MTA), a by-product of polyamine biosynthesis, to produce 5'-methylthioinosine (MTI). Plays an essential role in the purine salvage pathway which allows the parasite to use host cell purines for the synthesis of nucleic acids. The chain is Adenosine deaminase from Plasmodium vivax (strain Salvador I).